Here is a 321-residue protein sequence, read N- to C-terminus: Bifunctional ligase/repressor BirA (321 aa).

Residues 22–41 (GEQLGETLGMSRAAINKHIQ) constitute a DNA-binding region (H-T-H motif). One can recognise a BPL/LPL catalytic domain in the interval 67–254 (LNAKQILGQL…ELRAALELFE (188 aa)). Biotin is bound by residues 89 to 91 (STN), glutamine 112, 116 to 118 (RGR), and lysine 183.

This sequence belongs to the biotin--protein ligase family. As to quaternary structure, monomer in solution. Interacts with BCCP. Homodimerizes to bind DNA. Interaction with the corepressor bio-5'-AMP increases dimerization.

The catalysed reaction is biotin + L-lysyl-[protein] + ATP = N(6)-biotinyl-L-lysyl-[protein] + AMP + diphosphate + H(+). With respect to regulation, the switch between the enzymatic activity and the repressor activity is regulated by cellular demand for biotin. The switch occurs by swapping of protein interaction partners by holoBirA. In conditions of high biotin demand, holoBirA associates with apoBCCP to transfer biotin. In conditions of low biotin demand, holoBirA dimerizes, binds DNA and represses transcription of the biotin operon. Functionally, acts both as a biotin--[acetyl-CoA-carboxylase] ligase and a biotin-operon repressor. In the presence of ATP, BirA activates biotin to form the BirA-biotinyl-5'-adenylate (BirA-bio-5'-AMP or holoBirA) complex. HoloBirA can either transfer the biotinyl moiety to the biotin carboxyl carrier protein (BCCP) subunit of acetyl-CoA carboxylase, or bind to the biotin operator site and inhibit transcription of the operon. The sequence is that of Bifunctional ligase/repressor BirA from Escherichia coli (strain K12).